The chain runs to 85 residues: uncharacterized protein (85 aa).

This is an uncharacterized protein from Acidithiobacillus ferrooxidans (Thiobacillus ferrooxidans).